The following is a 341-amino-acid chain: Phenylalanine--tRNA ligase alpha subunit (341 aa).

Position 254 (Glu254) interacts with Mg(2+).

Belongs to the class-II aminoacyl-tRNA synthetase family. Phe-tRNA synthetase alpha subunit type 1 subfamily. In terms of assembly, tetramer of two alpha and two beta subunits. Requires Mg(2+) as cofactor.

Its subcellular location is the cytoplasm. It catalyses the reaction tRNA(Phe) + L-phenylalanine + ATP = L-phenylalanyl-tRNA(Phe) + AMP + diphosphate + H(+). This chain is Phenylalanine--tRNA ligase alpha subunit, found in Chlorobium phaeovibrioides (strain DSM 265 / 1930) (Prosthecochloris vibrioformis (strain DSM 265)).